The following is a 1260-amino-acid chain: Ankyrin repeat and sterile alpha motif domain-containing protein 1B (1260 aa).

ANK repeat units lie at residues 2 to 31, 58 to 87, 91 to 120, 127 to 156, 160 to 189, 193 to 222, and 225 to 254; these read GKDQ…GGIL, SGYT…STNV, KGYF…SHSR, ENET…DPTI, KLET…NLMS, RKHT…DVSC, and EKGS…DANI. The interval 298 to 326 is disordered; it reads HAQEDTAQETRLSSPAQSPSQKTKSETVT. The segment covering 306–326 has biased composition (polar residues); that stretch reads ETRLSSPAQSPSQKTKSETVT. Residues serine 310, serine 311, serine 315, serine 354, and serine 365 each carry the phosphoserine modification. Disordered stretches follow at residues 368–402, 491–513, and 556–642; these read ELGK…SCGP, PGTG…PSPD, and GCTS…EASL. Positions 372-385 are enriched in polar residues; it reads NGSQSVRTSSTINL. Threonine 504 is subject to Phosphothreonine. Phosphoserine is present on residues serine 508 and serine 511. Residues 556 to 575 are compositionally biased toward low complexity; it reads GCTSFTSSPPVSPPTSSVET. Residues 576–588 are compositionally biased toward basic and acidic residues; the sequence is TEIKNEGAEHTDD. Serine 739 is subject to Phosphoserine. The interval 754-778 is disordered; sequence VNWSKSSTAERSSKDNSERTPSFTS. Threonine 773 bears the Phosphothreonine mark. Serine 775 carries the phosphoserine modification. SAM domains follow at residues 810–876 and 884–949; these read CPVQ…LPKM and YHPT…RLHE. Tyrosine 901 bears the Phosphotyrosine mark. The Nuclear localization signal signature appears at 935-938; sequence HRKR. The segment at 946-989 is disordered; that stretch reads RLHEDPPQKPPRSITLREPSGNHTPPQLSPSLSQSTYTTGGSLD. Low complexity predominate over residues 969 to 984; the sequence is TPPQLSPSLSQSTYTT. The residue at position 974 (serine 974) is a Phosphoserine. Phosphotyrosine is present on tyrosine 1007. A PID domain is found at 1056-1213; the sequence is IFQSCDYKAF…SFENKPSKPI (158 aa). Positions 1197-1217 are disordered; sequence HSSTLPESFENKPSKPIPKPR.

As to quaternary structure, interacts with EPHA8. Isoform 2 interacts with COIL. Isoform 3 interacts with DLG4. Post-translationally, nuclear translocation of isoform 3 requires an NMDAR-dependent proteolytic cleavage. A 35 kDa N-terminal form shuttles to the nucleus. As to expression, isoform 3 is brain specific and highly enriched in the postsynaptic densities (PSDs), especially in cortical, striatal and hippocampal PSDs.

The protein resides in the cytoplasm. It localises to the nucleus. It is found in the postsynaptic density. The protein localises to the cell projection. Its subcellular location is the dendritic spine. The protein resides in the cajal body. Isoform 2 may participate in the regulation of nucleoplasmic coilin protein interactions in neuronal and transformed cells. Functionally, isoform 3 can regulate global protein synthesis by altering nucleolar numbers. This chain is Ankyrin repeat and sterile alpha motif domain-containing protein 1B (Anks1b), found in Rattus norvegicus (Rat).